Consider the following 133-residue polypeptide: Small ribosomal subunit protein uS8 (133 aa).

This sequence belongs to the universal ribosomal protein uS8 family. As to quaternary structure, part of the 30S ribosomal subunit. Contacts proteins S5 and S12.

In terms of biological role, one of the primary rRNA binding proteins, it binds directly to 16S rRNA central domain where it helps coordinate assembly of the platform of the 30S subunit. This is Small ribosomal subunit protein uS8 from Prochlorococcus marinus (strain SARG / CCMP1375 / SS120).